We begin with the raw amino-acid sequence, 96 residues long: Putative pterin-4-alpha-carbinolamine dehydratase (96 aa).

The protein belongs to the pterin-4-alpha-carbinolamine dehydratase family.

The catalysed reaction is (4aS,6R)-4a-hydroxy-L-erythro-5,6,7,8-tetrahydrobiopterin = (6R)-L-erythro-6,7-dihydrobiopterin + H2O. The protein is Putative pterin-4-alpha-carbinolamine dehydratase of Synechocystis sp. (strain ATCC 27184 / PCC 6803 / Kazusa).